Here is an 89-residue protein sequence, read N- to C-terminus: Small ribosomal subunit protein uS15 (89 aa).

A disordered region spans residues 1–25; it reads MSLDTTEKQQLINTHQTHGTDTGSA. The span at 8-25 shows a compositional bias: polar residues; sequence KQQLINTHQTHGTDTGSA.

Belongs to the universal ribosomal protein uS15 family. In terms of assembly, part of the 30S ribosomal subunit. Forms a bridge to the 50S subunit in the 70S ribosome, contacting the 23S rRNA.

In terms of biological role, one of the primary rRNA binding proteins, it binds directly to 16S rRNA where it helps nucleate assembly of the platform of the 30S subunit by binding and bridging several RNA helices of the 16S rRNA. Forms an intersubunit bridge (bridge B4) with the 23S rRNA of the 50S subunit in the ribosome. In Synechococcus sp. (strain CC9902), this protein is Small ribosomal subunit protein uS15.